Here is an 835-residue protein sequence, read N- to C-terminus: MNQIEQKWQYIWQEEKAFEVSNASSKPKYYVLEMLPYPSGKIHVGHVRNYSIGDVIARFMTMQGFNVLHPMGWDAFGLPAENAAIKNNSHPKKWTYSNIKNMKKQLKSMGFSYDWSREINSCDPEYYKHEQKFFLELYERNLAYQKASFVNWDPVDNTVLANEQVVDGRGWRSGAIVAKRYLKQWFLKITDYAEELLNEIQNLKEWPEAVRSMQEKWIGKSIGANFHFKIKDNEETTIEVFSTKPETIFGASFIGIAFNHPIIERLVSKTPEILAFITQCSHITRSSELEKAEKEGVFTGLFVTHPFDSNIVLPVIITNFVLMDYGTGAIFGCPAHDECDHELAVKMNLSIKQVIKADMDVQKTAYTEDGILINSDVLNGLTSNEAKQEVIGEFEKLGIGKRSVNYRLKDWGISRQRFWGCPIPMIHCEICGIVPVPYKDLPVTLPDDVNFDGHGNPLDHHPSWKHVNCPKCDKPAVRETDTFDTFFESSWYFTRYCNSNATEMTDKKACDYWLPVDKYIGGIEHAVMHLLYARFFTKVMNEQNYVSVREPFKGLFTQGMVLHATYKDEHNNWLYPEEVVKKGNEFFHKESNNRVVQGRIEKMSKSKKNLIDLETMQEQYGADAIRLFVLSDSPPEKDLEWSASGIEGCSRFINKLEYMFKAIDSLKDDVNSEVNKELNRLVHFTIKHVAEDIKHFALNRAIARMRELSNAISAEISKDKIDVKIVRHGFNVLVQLLNPFIPHITEEIWQKLGNKERLYNLSFPAFDESMLELDTYIMAVQVNGKLRDTYEFKTSVSEDEIKQVTVSLPKVQKCLEGKEPKKIILVPRKIVNILV.

A 'HIGH' region motif is present at residues 36–46 (PYPSGKIHVGH). The short motif at 602–606 (KMSKS) is the 'KMSKS' region element. Position 605 (lysine 605) interacts with ATP.

It belongs to the class-I aminoacyl-tRNA synthetase family.

It is found in the cytoplasm. The enzyme catalyses tRNA(Leu) + L-leucine + ATP = L-leucyl-tRNA(Leu) + AMP + diphosphate. The sequence is that of Leucine--tRNA ligase from Rickettsia peacockii (strain Rustic).